The sequence spans 413 residues: Arginine biosynthesis bifunctional protein ArgJ 1 (413 aa).

Residues Thr154, Lys180, Thr191, Glu277, Asn408, and Thr413 each coordinate substrate. The active-site Nucleophile is the Thr191.

Belongs to the ArgJ family. As to quaternary structure, heterotetramer of two alpha and two beta chains.

The protein resides in the cytoplasm. It catalyses the reaction N(2)-acetyl-L-ornithine + L-glutamate = N-acetyl-L-glutamate + L-ornithine. It carries out the reaction L-glutamate + acetyl-CoA = N-acetyl-L-glutamate + CoA + H(+). It functions in the pathway amino-acid biosynthesis; L-arginine biosynthesis; L-ornithine and N-acetyl-L-glutamate from L-glutamate and N(2)-acetyl-L-ornithine (cyclic): step 1/1. It participates in amino-acid biosynthesis; L-arginine biosynthesis; N(2)-acetyl-L-ornithine from L-glutamate: step 1/4. In terms of biological role, catalyzes two activities which are involved in the cyclic version of arginine biosynthesis: the synthesis of N-acetylglutamate from glutamate and acetyl-CoA as the acetyl donor, and of ornithine by transacetylation between N(2)-acetylornithine and glutamate. This chain is Arginine biosynthesis bifunctional protein ArgJ 1, found in Nostoc sp. (strain PCC 7120 / SAG 25.82 / UTEX 2576).